The following is a 101-amino-acid chain: MMLEHVLVLSAYLFSFVLYGLITSRNMVRALMCLELILNAVNLNFVTFSDFFDSRQLKGAIFSIFVIAIAAAEAAIGLAIVSSIYRNRKSTRINQSNLLNK.

3 consecutive transmembrane segments (helical) span residues 2-22 (MLEHVLVLSAYLFSFVLYGLI), 32-52 (MCLELILNAVNLNFVTFSDFF), and 61-81 (IFSIFVIAIAAAEAAIGLAIV).

It belongs to the complex I subunit 4L family. As to quaternary structure, NDH is composed of at least 16 different subunits, 5 of which are encoded in the nucleus.

Its subcellular location is the plastid. It localises to the chloroplast thylakoid membrane. The enzyme catalyses a plastoquinone + NADH + (n+1) H(+)(in) = a plastoquinol + NAD(+) + n H(+)(out). The catalysed reaction is a plastoquinone + NADPH + (n+1) H(+)(in) = a plastoquinol + NADP(+) + n H(+)(out). In terms of biological role, NDH shuttles electrons from NAD(P)H:plastoquinone, via FMN and iron-sulfur (Fe-S) centers, to quinones in the photosynthetic chain and possibly in a chloroplast respiratory chain. The immediate electron acceptor for the enzyme in this species is believed to be plastoquinone. Couples the redox reaction to proton translocation, and thus conserves the redox energy in a proton gradient. This is NAD(P)H-quinone oxidoreductase subunit 4L, chloroplastic from Guizotia abyssinica (Niger).